The primary structure comprises 255 residues: Hydroxyacylglutathione hydrolase (255 aa).

7 residues coordinate Zn(2+): H53, H55, D57, H58, H110, D127, and H165.

It belongs to the metallo-beta-lactamase superfamily. Glyoxalase II family. As to quaternary structure, monomer. The cofactor is Zn(2+).

It catalyses the reaction an S-(2-hydroxyacyl)glutathione + H2O = a 2-hydroxy carboxylate + glutathione + H(+). The protein operates within secondary metabolite metabolism; methylglyoxal degradation; (R)-lactate from methylglyoxal: step 2/2. Functionally, thiolesterase that catalyzes the hydrolysis of S-D-lactoyl-glutathione to form glutathione and D-lactic acid. The polypeptide is Hydroxyacylglutathione hydrolase (Xanthomonas campestris pv. campestris (strain 8004)).